The chain runs to 446 residues: 3-phosphoshikimate 1-carboxyvinyltransferase (446 aa).

Residues Lys30, Ser31, and Arg35 each coordinate 3-phosphoshikimate. Lys30 is a binding site for phosphoenolpyruvate. Phosphoenolpyruvate-binding residues include Gly112 and Arg140. Residues Ser186, Ser187, Gln188, Ser215, Glu334, and His361 each contribute to the 3-phosphoshikimate site. Residue Gln188 participates in phosphoenolpyruvate binding. The Proton acceptor role is filled by Glu334. Positions 365, 406, and 431 each coordinate phosphoenolpyruvate.

Belongs to the EPSP synthase family. As to quaternary structure, monomer.

It localises to the cytoplasm. The enzyme catalyses 3-phosphoshikimate + phosphoenolpyruvate = 5-O-(1-carboxyvinyl)-3-phosphoshikimate + phosphate. The protein operates within metabolic intermediate biosynthesis; chorismate biosynthesis; chorismate from D-erythrose 4-phosphate and phosphoenolpyruvate: step 6/7. Its function is as follows. Catalyzes the transfer of the enolpyruvyl moiety of phosphoenolpyruvate (PEP) to the 5-hydroxyl of shikimate-3-phosphate (S3P) to produce enolpyruvyl shikimate-3-phosphate and inorganic phosphate. The sequence is that of 3-phosphoshikimate 1-carboxyvinyltransferase from Streptomyces avermitilis (strain ATCC 31267 / DSM 46492 / JCM 5070 / NBRC 14893 / NCIMB 12804 / NRRL 8165 / MA-4680).